We begin with the raw amino-acid sequence, 106 residues long: Putative toxin Rv3098A/RVBD_3098A (106 aa).

The protein belongs to the PemK/MazF family. As to quaternary structure, forms a complex with cognate antitoxin Rv3098B/RVBD_3098B.

Functionally, putative toxic component of a possible type II toxin-antitoxin (TA) system. Its toxic effect may be neutralized by cognate antitoxin Rv3098B/RVBD_3098B. The chain is Putative toxin Rv3098A/RVBD_3098A from Mycobacterium tuberculosis (strain ATCC 25618 / H37Rv).